Reading from the N-terminus, the 324-residue chain is Phospho-N-acetylmuramoyl-pentapeptide-transferase (324 aa).

The next 10 membrane-spanning stretches (helical) occupy residues 5–25 (IIVI…PLFI), 52–72 (PTMG…WVTA), 76–96 (VLSA…VLGF), 117–137 (FIGQ…SGFS), 147–167 (WSFD…VGGS), 176–196 (LDGL…VLAW), 203–223 (VAVF…FNAH), 227–247 (VFMG…VAVL), 250–270 (LELL…SVII), and 302–322 (IVVT…YIEV).

Belongs to the glycosyltransferase 4 family. MraY subfamily. It depends on Mg(2+) as a cofactor.

The protein resides in the cell membrane. The catalysed reaction is UDP-N-acetyl-alpha-D-muramoyl-L-alanyl-gamma-D-glutamyl-meso-2,6-diaminopimeloyl-D-alanyl-D-alanine + di-trans,octa-cis-undecaprenyl phosphate = di-trans,octa-cis-undecaprenyl diphospho-N-acetyl-alpha-D-muramoyl-L-alanyl-D-glutamyl-meso-2,6-diaminopimeloyl-D-alanyl-D-alanine + UMP. The protein operates within cell wall biogenesis; peptidoglycan biosynthesis. Catalyzes the initial step of the lipid cycle reactions in the biosynthesis of the cell wall peptidoglycan: transfers peptidoglycan precursor phospho-MurNAc-pentapeptide from UDP-MurNAc-pentapeptide onto the lipid carrier undecaprenyl phosphate, yielding undecaprenyl-pyrophosphoryl-MurNAc-pentapeptide, known as lipid I. This is Phospho-N-acetylmuramoyl-pentapeptide-transferase from Geobacillus thermodenitrificans (strain NG80-2).